A 120-amino-acid chain; its full sequence is Small ribosomal subunit protein uS13 (120 aa).

Residues 93–120 form a disordered region; sequence RKGLPVRGQTTKNNARTRKGKKKTVGSK. The span at 107–120 shows a compositional bias: basic residues; sequence ARTRKGKKKTVGSK.

This sequence belongs to the universal ribosomal protein uS13 family. In terms of assembly, part of the 30S ribosomal subunit. Forms a loose heterodimer with protein S19. Forms two bridges to the 50S subunit in the 70S ribosome.

Its function is as follows. Located at the top of the head of the 30S subunit, it contacts several helices of the 16S rRNA. In the 70S ribosome it contacts the 23S rRNA (bridge B1a) and protein L5 of the 50S subunit (bridge B1b), connecting the 2 subunits; these bridges are implicated in subunit movement. Contacts the tRNAs in the A and P-sites. The polypeptide is Small ribosomal subunit protein uS13 (Helicobacter pylori (strain P12)).